The primary structure comprises 478 residues: GTPase Obg (478 aa).

The region spanning 2 to 159 (TTFVDRVELH…RDIVLELKTV (158 aa)) is the Obg domain. The interval 61-87 (HHSPHRKATNGQPGAGDNRSGKDGQDL) is disordered. Residues 160–330 (ADVALVGYPS…LSFALAGIIA (171 aa)) form the OBG-type G domain. GTP-binding positions include 166-173 (GYPSAGKS), 191-195 (FTTLV), 212-215 (DVPG), 282-285 (NKVD), and 311-313 (SAI). Ser173 and Thr193 together coordinate Mg(2+). The OCT domain occupies 348–430 (PRAVDDAGFT…ENAVVFDWEP (83 aa)). Residues 436–478 (AEMLGRRGEDHRLEEPRPAAQRRRERDAERDDAEKEYDEFDPF) are disordered. The span at 439-468 (LGRRGEDHRLEEPRPAAQRRRERDAERDDA) shows a compositional bias: basic and acidic residues. Residues 469 to 478 (EKEYDEFDPF) show a composition bias toward acidic residues.

The protein belongs to the TRAFAC class OBG-HflX-like GTPase superfamily. OBG GTPase family. Monomer. Requires Mg(2+) as cofactor.

The protein localises to the cytoplasm. Functionally, an essential GTPase which binds GTP, GDP and possibly (p)ppGpp with moderate affinity, with high nucleotide exchange rates and a fairly low GTP hydrolysis rate. Plays a role in control of the cell cycle, stress response, ribosome biogenesis and in those bacteria that undergo differentiation, in morphogenesis control. The protein is GTPase Obg of Streptomyces griseus subsp. griseus (strain JCM 4626 / CBS 651.72 / NBRC 13350 / KCC S-0626 / ISP 5235).